The sequence spans 409 residues: 5-aminolevulinate synthase (409 aa).

The substrate site is built by Arg21 and Ser136. Pyridoxal 5'-phosphate-binding residues include Ser188, His216, and Thr244. Residue Lys247 is part of the active site. The residue at position 247 (Lys247) is an N6-(pyridoxal phosphate)lysine. 2 residues coordinate pyridoxal 5'-phosphate: Thr276 and Thr277. Thr362 lines the substrate pocket.

Belongs to the class-II pyridoxal-phosphate-dependent aminotransferase family. Homodimer. Pyridoxal 5'-phosphate is required as a cofactor.

It carries out the reaction succinyl-CoA + glycine + H(+) = 5-aminolevulinate + CO2 + CoA. It functions in the pathway porphyrin-containing compound metabolism; protoporphyrin-IX biosynthesis; 5-aminolevulinate from glycine: step 1/1. The polypeptide is 5-aminolevulinate synthase (hemA) (Bradyrhizobium diazoefficiens (strain JCM 10833 / BCRC 13528 / IAM 13628 / NBRC 14792 / USDA 110)).